The following is a 366-amino-acid chain: Growth hormone secretagogue receptor type 1 (366 aa).

At 1–40 the chain is on the extracellular side; sequence MWNATPSEEPGFNLTLADLDWDASPGNDSLGDELLQLFPA. Residues asparagine 13 and asparagine 27 are each glycosylated (N-linked (GlcNAc...) asparagine). A helical transmembrane segment spans residues 41–66; sequence PLLAGVTATCVALFVVGIAGNLLTML. Topologically, residues 67–72 are cytoplasmic; it reads VVSRFR. The helical transmembrane segment at 73-96 threads the bilayer; sequence ELRTTTNLYLSSMAFSDLLIFLCM. Residues 97–117 lie on the Extracellular side of the membrane; the sequence is PLDLVRLWQYRPWNFGDLLCK. The cysteines at positions 116 and 198 are disulfide-linked. Residues 118 to 139 traverse the membrane as a helical segment; it reads LFQFVSESCTYATVLTITALSV. Residues 140–162 are Cytoplasmic-facing; sequence ERYFAICFPLRAKVVVTKGRVKL. Residues 163–183 traverse the membrane as a helical segment; the sequence is VIFVIWAVAFCSAGPIFVLVG. Residues 184–211 lie on the Extracellular side of the membrane; sequence VEHENGTDPWDTNECRPTEFAVRSGLLT. The helical transmembrane segment at 212–235 threads the bilayer; sequence VMVWVSSIFFFLPVFCLTVLYSLI. Residues 236 to 263 lie on the Cytoplasmic side of the membrane; sequence GRKLWRRRRGDAVVGASLRDQNHKQTVK. The chain crosses the membrane as a helical span at residues 264 to 285; that stretch reads MLAVVVFAFILCWLPFHVGRYL. Topologically, residues 286–302 are extracellular; it reads FSKSFEPGSLEIAQISQ. A helical membrane pass occupies residues 303–326; it reads YCNLVSFVLFYLSAAINPILYNIM. Over 327–366 the chain is Cytoplasmic; sequence SKKYRVAVFRLLGFEPFSQRKLSTLKDESSRAWTESSINT.

It belongs to the G-protein coupled receptor 1 family. In terms of tissue distribution, pituitary and hypothalamus.

Its subcellular location is the cell membrane. In terms of biological role, receptor for ghrelin, coupled to G-alpha-11 proteins. Stimulates growth hormone secretion. Also binds other growth hormone releasing peptides (GHRP) (e.g. Met-enkephalin and GHRP-6) as well as non-peptide, low molecular weight secretagogues (e.g. L-692,429, MK-0677, adenosine). This is Growth hormone secretagogue receptor type 1 (GHSR) from Homo sapiens (Human).